The primary structure comprises 1437 residues: CRISPR-associated endoribonuclease Cas13a (1437 aa).

2 HEPN-like fold regions span residues 460-626 (LNAS…AMFE) and 1101-1437 (EFRD…QLKN). Residues 1377–1419 (EVKEKKKPSDNNTGKGYSKRDRQQDRKEYDKYKEKKKKEGNFL) form a disordered region. A compositionally biased stretch (basic and acidic residues) spans 1394 to 1416 (SKRDRQQDRKEYDKYKEKKKKEG).

The protein belongs to the CRISPR-associated endoribonuclease Cas13a family. It depends on a divalent metal cation as a cofactor.

Its activity is regulated as follows. Target RNA acts as an activator for non-specific ssRNA degradation. CRISPR (clustered regularly interspaced short palindromic repeat), is an adaptive immune system that provides protection against mobile genetic elements (viruses, transposable elements and conjugative plasmids). CRISPR clusters contain sequences complementary to antecedent mobile elements and target invading nucleic acids. Unlike many single-component effectors, this CRISPR-Cas system targets RNA. CRISPR clusters are transcribed from pre-CRISPR RNA (crRNA) and processed into crRNA by this protein. Cleaves linear target ssRNA in a pre-crRNA-dependent fashion, preferentially around A residues. Binding a viable target RNA target activates this protein for non-specific RNA degradation in vitro (called collateral RNA degradation), but it is not very sensitive as it requires nanomolar levels of viable target RNA. The polypeptide is CRISPR-associated endoribonuclease Cas13a (Lachnospiraceae bacterium (strain NK4A179)).